The following is an 88-amino-acid chain: uncharacterized protein (88 aa).

Residues Met1–Ala25 form the signal peptide.

This is an uncharacterized protein from Escherichia coli O6:H1 (strain CFT073 / ATCC 700928 / UPEC).